A 328-amino-acid polypeptide reads, in one-letter code: Urokinase plasminogen activator surface receptor (328 aa).

Positions 1 to 24 (MGLLRRRLLLLVVVVTTCVPASQG) are cleaved as a signal peptide. UPAR/Ly6 domains lie at 25 to 118 (LRCI…GRYL), 118 to 213 (LECA…PPNG), and 214 to 299 (FQCY…RPTG). 3 disulfide bridges follow: cysteine 27/cysteine 48, cysteine 30/cysteine 36, and cysteine 41/cysteine 69. Asparagine 76 carries an N-linked (GlcNAc...) asparagine glycan. Cystine bridges form between cysteine 95–cysteine 100, cysteine 120–cysteine 147, cysteine 123–cysteine 130, cysteine 140–cysteine 169, cysteine 175–cysteine 192, cysteine 193–cysteine 198, cysteine 216–cysteine 244, cysteine 219–cysteine 227, cysteine 237–cysteine 263, cysteine 269–cysteine 288, and cysteine 289–cysteine 294. Residues asparagine 184, asparagine 194, asparagine 222, asparagine 255, asparagine 283, and asparagine 290 are each glycosylated (N-linked (GlcNAc...) asparagine). The GPI-anchor amidated glycine moiety is linked to residue glycine 299. The propeptide at 300–328 (GAPGPGPAHLILIASLLLTLRLWGIPLWT) is removed in mature form.

In terms of assembly, monomer. Interacts (via the UPAR/Ly6 domains) with SRPX2. Interacts with MRC2. Interacts with SORL1 (via N-terminal ectodomain); this interaction decreases PLAUR internalization. The ternary complex composed of PLAUR-PLAU-SERPINE1 also interacts with SORL1. Interacts with CD82; this interaction prevents PLAUR from binding to its high affinity ligand PLAU.

Its subcellular location is the cell membrane. The protein resides in the secreted. Functionally, acts as a receptor for urokinase plasminogen activator. Plays a role in localizing and promoting plasmin formation. Mediates the proteolysis-independent signal transduction activation effects of U-PA. This is Urokinase plasminogen activator surface receptor (Plaur) from Rattus norvegicus (Rat).